The chain runs to 92 residues: MKKILVACGTGMSTSTMIAHKLQEFLTEQGISATTAQCCLNEIPLNCNGMDLIVTSMRTNSDYGIPTLNGAALLTGINDDALKQQIKALLTQ.

A PTS EIIB type-2 domain is found at 1-92 (MKKILVACGT…KQQIKALLTQ (92 aa)). The active-site Phosphocysteine intermediate is the Cys-8.

Its subcellular location is the cytoplasm. Functionally, the phosphoenolpyruvate-dependent sugar phosphotransferase system (sugar PTS), a major carbohydrate active -transport system, catalyzes the phosphorylation of incoming sugar substrates concomitantly with their translocation across the cell membrane. The protein is Putative phosphotransferase enzyme IIB component SgcB (sgcB) of Escherichia coli (strain K12).